A 307-amino-acid polypeptide reads, in one-letter code: tRNA-cytidine(32) 2-sulfurtransferase (307 aa).

The PP-loop motif signature appears at serine 44–serine 49. [4Fe-4S] cluster is bound by residues cysteine 119, cysteine 122, and cysteine 210.

This sequence belongs to the TtcA family. In terms of assembly, homodimer. Mg(2+) is required as a cofactor. The cofactor is [4Fe-4S] cluster.

It is found in the cytoplasm. The enzyme catalyses cytidine(32) in tRNA + S-sulfanyl-L-cysteinyl-[cysteine desulfurase] + AH2 + ATP = 2-thiocytidine(32) in tRNA + L-cysteinyl-[cysteine desulfurase] + A + AMP + diphosphate + H(+). It functions in the pathway tRNA modification. Catalyzes the ATP-dependent 2-thiolation of cytidine in position 32 of tRNA, to form 2-thiocytidine (s(2)C32). The sulfur atoms are provided by the cysteine/cysteine desulfurase (IscS) system. The chain is tRNA-cytidine(32) 2-sulfurtransferase from Aliivibrio salmonicida (strain LFI1238) (Vibrio salmonicida (strain LFI1238)).